A 741-amino-acid polypeptide reads, in one-letter code: MEQTYQYAWIIPFLPLPVPMLIGLGLLLFPTATKSLRRMWAFQSVFLLSIVMILSMNLSIQQINSSSVYQYVWSWIINNDFSLEFGYLIDPLTSIMSILITTVGIMVLIYSDNYMSHDHGYLRFFAYMSFFSTSMLGLVTSSNLIQIYIFWELVGVCSYLLIGFWFTRPVAAKACQKAFVTNRVGDFGLLLGILGFYWITGSFEFSDLFQIFNNLISNNEVNFLFVTLCAILLFAGAIAKSAQFPLHVWLPDAMEGPTPISALIHAATMVAAGIFLVARLMPLFIVIPHIMNFISLIGIITVFLGATLALAQKDIKRGLAYSTMSQLGYMMLALGMGSYRSALFHLITHAYSKALLFLGSGSVIHSMETLVGYCPKKSQNMVLMGGLTKHVPITKNSFLLGTLSLCGIPPLACFWSKDEILNDSWLYSPIFGIIAWSTAGLTAFYMCRIYLLTFEGHLNVHFQNYSGKSNTPFYSISLWGKEGSKISNKNFRLLTLLKMNKNARPSFFSNRVYKIDENVRNRIQPFLSIPHFGNTKTYSYPYESDNTMLFPILVLILFTLFVGFLGIPFTQDVDILSKWLTPSINLLHKNSNNLIDWYEFSKDAFFSVSIASFGIFIAFFLYKPVYSTFQNLDFLNAFVKMGPNRIFYDKIKNAIYDWSYNRGYIDAFYGRFLTAGMRKLADFAHFFDRRIIDAIPNGVGLMSFFLAEVIKSVGGGRISSYLFFYFSYVAIFLLIYYFFNL.

16 helical membrane-spanning segments follow: residues 9–29 (WIIP…LLLF), 40–60 (WAFQ…NLSI), 89–109 (IDPL…MVLI), 125–145 (FAYM…SNLI), 147–167 (IYIF…FWFT), 185–205 (GDFG…SFEF), 219–239 (NEVN…GAIA), 258–278 (TPIS…FLVA), 283–303 (LFIV…ITVF), 327–347 (LGYM…FHLI), 354–374 (ALLF…VGYC), 396–416 (NSFL…CFWS), 425–445 (WLYS…TAFY), 549–569 (LFPI…GIPF), 605–625 (FFSV…YKPV), and 721–741 (YLFF…FFNL).

Belongs to the complex I subunit 5 family. As to quaternary structure, NDH is composed of at least 16 different subunits, 5 of which are encoded in the nucleus.

The protein localises to the plastid. Its subcellular location is the chloroplast thylakoid membrane. The enzyme catalyses a plastoquinone + NADH + (n+1) H(+)(in) = a plastoquinol + NAD(+) + n H(+)(out). The catalysed reaction is a plastoquinone + NADPH + (n+1) H(+)(in) = a plastoquinol + NADP(+) + n H(+)(out). Its function is as follows. NDH shuttles electrons from NAD(P)H:plastoquinone, via FMN and iron-sulfur (Fe-S) centers, to quinones in the photosynthetic chain and possibly in a chloroplast respiratory chain. The immediate electron acceptor for the enzyme in this species is believed to be plastoquinone. Couples the redox reaction to proton translocation, and thus conserves the redox energy in a proton gradient. This chain is NAD(P)H-quinone oxidoreductase subunit 5, chloroplastic (ndhF), found in Cichorium intybus (Chicory).